Reading from the N-terminus, the 29-residue chain is Glucagon (29 aa).

Belongs to the glucagon family.

It localises to the secreted. Its function is as follows. Glucagon plays a key role in glucose metabolism and homeostasis. Regulates blood glucose by increasing gluconeogenesis and decreasing glycolysis. The sequence is that of Glucagon (GCG) from Meleagris gallopavo (Wild turkey).